We begin with the raw amino-acid sequence, 512 residues long: NAD(P)H-quinone oxidoreductase chain 4, chloroplastic (512 aa).

The next 14 helical transmembrane spans lie at Val-4 to Leu-24, Trp-34 to Tyr-54, Ile-87 to Val-107, Pro-111 to Ser-131, Ile-134 to Met-154, Phe-167 to Leu-187, Gly-208 to Phe-228, His-242 to Ile-262, Thr-274 to Val-294, Ser-308 to Leu-328, Gly-330 to Gly-350, Met-374 to Ser-396, Ile-417 to Val-437, and Val-462 to Ala-482.

It belongs to the complex I subunit 4 family.

It is found in the plastid. It localises to the chloroplast thylakoid membrane. The catalysed reaction is a plastoquinone + NADH + (n+1) H(+)(in) = a plastoquinol + NAD(+) + n H(+)(out). It carries out the reaction a plastoquinone + NADPH + (n+1) H(+)(in) = a plastoquinol + NADP(+) + n H(+)(out). The polypeptide is NAD(P)H-quinone oxidoreductase chain 4, chloroplastic (Zygnema circumcarinatum (Green alga)).